Here is a 148-residue protein sequence, read N- to C-terminus: Small ribosomal subunit protein bS6 (148 aa).

Residues Glu-97–Glu-148 are disordered.

It belongs to the bacterial ribosomal protein bS6 family.

Functionally, binds together with bS18 to 16S ribosomal RNA. This is Small ribosomal subunit protein bS6 from Chelativorans sp. (strain BNC1).